A 256-amino-acid polypeptide reads, in one-letter code: MALAKRIIPCLDVDNGRVVKGVKFENIRDAGDPVEIARRYDEQGADEITFLDITASVDGRDTTLHTVERMASQVFIPLTVGGGVRTVQDIRNLLNAGADKVSINTAAVFNPEFVGEAAQHFGSQCIVVAIDAKKVSGPGETPRWEIFTHGGRKPTGLDAVEWAKKMEGLGAGEILLTSMDQDGMKNGFDLGVTRAISDALGIPVIASGGVGNLQHLADGILEGHASAVLAASIFHFGEYTVQEAKAYMSKRGIVMR.

Residues D12 and D131 contribute to the active site.

This sequence belongs to the HisA/HisF family. In terms of assembly, heterodimer of HisH and HisF.

Its subcellular location is the cytoplasm. It catalyses the reaction 5-[(5-phospho-1-deoxy-D-ribulos-1-ylimino)methylamino]-1-(5-phospho-beta-D-ribosyl)imidazole-4-carboxamide + L-glutamine = D-erythro-1-(imidazol-4-yl)glycerol 3-phosphate + 5-amino-1-(5-phospho-beta-D-ribosyl)imidazole-4-carboxamide + L-glutamate + H(+). It participates in amino-acid biosynthesis; L-histidine biosynthesis; L-histidine from 5-phospho-alpha-D-ribose 1-diphosphate: step 5/9. In terms of biological role, IGPS catalyzes the conversion of PRFAR and glutamine to IGP, AICAR and glutamate. The HisF subunit catalyzes the cyclization activity that produces IGP and AICAR from PRFAR using the ammonia provided by the HisH subunit. The polypeptide is Imidazole glycerol phosphate synthase subunit HisF (Pseudomonas fluorescens (strain Pf0-1)).